A 474-amino-acid polypeptide reads, in one-letter code: tRNA-2-methylthio-N(6)-dimethylallyladenosine synthase (474 aa).

The MTTase N-terminal domain occupies 3 to 120; sequence KKLHIKTWGC…LPDMIDQVRR (118 aa). Residues C12, C49, C83, C157, C161, and C164 each contribute to the [4Fe-4S] cluster site. The 233-residue stretch at 143-375 folds into the Radical SAM core domain; it reads RAEGPTAFVS…QDRITQQAMR (233 aa). In terms of domain architecture, TRAM spans 378–441; that stretch reads RHMMGTVQRI…TNSLRGKFIR (64 aa).

The protein belongs to the methylthiotransferase family. MiaB subfamily. As to quaternary structure, monomer. [4Fe-4S] cluster serves as cofactor.

The protein localises to the cytoplasm. It catalyses the reaction N(6)-dimethylallyladenosine(37) in tRNA + (sulfur carrier)-SH + AH2 + 2 S-adenosyl-L-methionine = 2-methylsulfanyl-N(6)-dimethylallyladenosine(37) in tRNA + (sulfur carrier)-H + 5'-deoxyadenosine + L-methionine + A + S-adenosyl-L-homocysteine + 2 H(+). Functionally, catalyzes the methylthiolation of N6-(dimethylallyl)adenosine (i(6)A), leading to the formation of 2-methylthio-N6-(dimethylallyl)adenosine (ms(2)i(6)A) at position 37 in tRNAs that read codons beginning with uridine. This Shewanella sp. (strain ANA-3) protein is tRNA-2-methylthio-N(6)-dimethylallyladenosine synthase.